Here is a 904-residue protein sequence, read N- to C-terminus: Anoctamin-5 (904 aa).

At 1-290 (MVEQEGLTAK…HLIRNYFGEK (290 aa)) the chain is on the cytoplasmic side. A helical membrane pass occupies residues 291-311 (IGIYFVFLGYYTEMLLFAALV). Residues 312–371 (GLACFIYGLLSMENNRTSTEICDPDIGGQMIMCPLCDEVCDYWRLNTTCLHSKFSHLFDN) lie on the Extracellular side of the membrane. Residues Asn326, Asn357, and Asn371 are each glycosylated (N-linked (GlcNAc...) asparagine). A helical membrane pass occupies residues 372–392 (ESTVFFALFMGIWVTLFLEFW). Over 393–453 (KQRQARLEYE…CHRIPWYFVS (61 aa)) the chain is Cytoplasmic. The chain crosses the membrane as a helical span at residues 454 to 474 (GTTVTFGMALLLSSMVSILIY). The Extracellular segment spans residues 475-502 (RLSVFATFASFMESEATLQSVKSFFTPQ). Residues 503-523 (LATALSGSCLNCIVILILNFF) traverse the membrane as a helical segment. The Cytoplasmic segment spans residues 524–548 (YEKISAWITKMEIPRTHQEYESSLT). Residues 549 to 569 (LKMFLFQFVNYYSSCFYVAFF) form a helical membrane-spanning segment. The Extracellular segment spans residues 570 to 667 (KGKFVGYPGS…RGLFYEYLET (98 aa)). The chain crosses the membrane as a helical span at residues 668 to 688 (VIQFGFATLFVASFPLAPLFA). Over 689–723 (LMNNIMGIRVDAWKLTTQYRRPVAAKAHSIGVWQD) the chain is Cytoplasmic. The chain crosses the membrane as a helical span at residues 724-744 (ILFGMAIVSVATNAFIVSFTS). The Extracellular segment spans residues 745–825 (DIIPRLVYFY…FWHVLAAKMT (81 aa)). Residues Asn759, Asn769, and Asn782 are each glycosylated (N-linked (GlcNAc...) asparagine). A helical membrane pass occupies residues 826–846 (FIIVMEHVVFLFKFLLAWLIP). At 847–904 (DVPKDVVEKIKREKLMTIKIIHDFELNKLKENLDVEYGNIMKNVLVDEDNSLKAKTTV) the chain is on the cytoplasmic side.

The protein belongs to the anoctamin family. As to expression, highly expressed in skeletal muscle, bone tissues and thyroid gland.

It is found in the endoplasmic reticulum membrane. It localises to the cell membrane. Plays a role in plasma membrane repair in a process involving annexins. Does not exhibit calcium-activated chloride channel (CaCC) activity. The protein is Anoctamin-5 (Ano5) of Mus musculus (Mouse).